The chain runs to 298 residues: Protease HtpX homolog (298 aa).

2 consecutive transmembrane segments (helical) span residues 14–34 (VVLL…AGYL) and 39–59 (YAMG…SMIF). His143 is a Zn(2+) binding site. Glu144 is a catalytic residue. His147 lines the Zn(2+) pocket. The next 2 membrane-spanning stretches (helical) occupy residues 158-178 (IAVA…RMLW) and 197-217 (IITL…ASLI). Residue Glu226 participates in Zn(2+) binding.

This sequence belongs to the peptidase M48B family. The cofactor is Zn(2+).

The protein localises to the cell membrane. This Streptococcus pyogenes serotype M3 (strain SSI-1) protein is Protease HtpX homolog.